Here is a 359-residue protein sequence, read N- to C-terminus: DNA-directed RNA polymerase RPB3-11 homolog (359 aa).

This sequence in the N-terminal section; belongs to the archaeal RpoD/eukaryotic RPB3 RNA polymerase subunit family. The protein in the C-terminal section; belongs to the archaeal RpoL/eukaryotic RPB11/RPC19 RNA polymerase subunit family. As to quaternary structure, part of the viral DNA-directed RNA polymerase that consists of 8 polII-like subunits (RPB1, RPB2, RPB3, RPB5, RPB6, RPB7, RPB9, RPB10), a capping enzyme and a termination factor.

Its subcellular location is the host cytoplasm. It localises to the virion. Functionally, component of the DNA-directed RNA polymerase (RNAP) that catalyzes the transcription in the cytoplasm of viral DNA into RNA using the four ribonucleoside triphosphates as substrates. This is DNA-directed RNA polymerase RPB3-11 homolog from Ornithodoros (relapsing fever ticks).